The chain runs to 348 residues: Rhodopsin (348 aa).

At methionine 1 the chain carries N-acetylmethionine. Topologically, residues 1 to 36 (MNGTEGPNFYVPFSNATGVVRSPFEYPQYYLAEPWQ) are extracellular. Residues asparagine 2 and asparagine 15 are each glycosylated (N-linked (GlcNAc...) asparagine). A helical membrane pass occupies residues 37–61 (FSMLAAYMFLLIVLGFPINFLTLYV). Residues 62-73 (TVQHKKLRTPLN) are Cytoplasmic-facing. A helical transmembrane segment spans residues 74–96 (YILLNLAVADLFMVFGGFTTTLY). Topologically, residues 97 to 110 (TSLHGYFVFGPTGC) are extracellular. Cysteine 110 and cysteine 187 form a disulfide bridge. A helical transmembrane segment spans residues 111–133 (NLEGFFATLGGEIALWSLVVLAI). The 'Ionic lock' involved in activated form stabilization motif lies at 134–136 (ERY). Residues 134–152 (ERYVVICKPMSNFRFGENH) lie on the Cytoplasmic side of the membrane. A helical transmembrane segment spans residues 153–173 (AIMGVVFTWIMALACAAPPLV). Over 174 to 202 (GWSRYIPEGMQCSCGVDYYTLKPEVNNES) the chain is Extracellular. Glutamate 201 lines the Zn(2+) pocket. Residues 203 to 224 (FVIYMFVVHFTIPLIVIFFCYG) form a helical membrane-spanning segment. Topologically, residues 225–252 (QLVFTVKEAAAQQQESATTQKAEKEVTR) are cytoplasmic. Residues 253–274 (MVILMVVFFLICWFPYAGVAFY) form a helical membrane-spanning segment. Residues 275 to 286 (IFTHQGSNFGPI) lie on the Extracellular side of the membrane. Glutamine 279 contributes to the Zn(2+) binding site. Residues 287–308 (FMTLPAFFAKSSSIYNPVIYIM) form a helical membrane-spanning segment. N6-(retinylidene)lysine is present on lysine 296. Residues 309–348 (MNKQFRNCMLTTLCCGKNILGDDEASATASKTETSQVAPA) lie on the Cytoplasmic side of the membrane. S-palmitoyl cysteine attachment occurs at residues cysteine 322 and cysteine 323. Positions 330–348 (DDEASATASKTETSQVAPA) are interaction with SAG. Residue serine 334 is modified to Phosphoserine. Threonine 336 is modified (phosphothreonine). Serine 338 carries the phosphoserine modification. Residues threonine 340 and threonine 342 each carry the phosphothreonine modification. At serine 343 the chain carries Phosphoserine.

The protein belongs to the G-protein coupled receptor 1 family. Opsin subfamily. In terms of assembly, homodimer. May form a complex composed of RHO, GRK1 and RCVRN in a Ca(2+)-dependent manner; RCVRN prevents the interaction between GRK1 and RHO. Interacts with GRK1. Interacts (phosphorylated form) with SAG. Interacts with GNAT1. Interacts with GNAT3. SAG and G-proteins compete for a common binding site. Interacts with PRCD; the interaction promotes PRCD stability. Forms a complex with ASAP1 and ARF4. Forms a complex with ASAP1, RAB11A, Rabin8/RAB3IP, ARF4 and RAB11FIP3; the complex regulates Golgi-to-cilia rhodopsin/RHO transport in photoreceptors. In terms of processing, phosphorylated on some or all of the serine and threonine residues present in the C-terminal region. Post-translationally, contains one covalently linked retinal chromophore. Upon light absorption, the covalently bound 11-cis-retinal is converted to all-trans-retinal. After hydrolysis of the Schiff base and release of the covalently bound all-trans-retinal, active rhodopsin is regenerated by binding of a fresh molecule of 11-cis-retinal.

The protein resides in the membrane. It localises to the cell projection. It is found in the cilium. Its subcellular location is the photoreceptor outer segment. Its function is as follows. Photoreceptor required for image-forming vision at low light intensity. Required for photoreceptor cell viability after birth. Light-induced isomerization of 11-cis to all-trans retinal triggers a conformational change that activates signaling via G-proteins. Subsequent receptor phosphorylation mediates displacement of the bound G-protein alpha subunit by the arrestin SAG and terminates signaling. The protein is Rhodopsin (RHO) of Cricetulus griseus (Chinese hamster).